The following is a 193-amino-acid chain: MLEYLLLLISTVLVNNFVLVKFLGLCPFMGVSKKIEPAVGMGLATTFVLTLTSAFAYLVQHYLLVPLAAESLSTLAFILVIAVVVQFTEMVIHKSAPDLYRILGIYLPLITTNCIVLGLALLNITMQHNFMQSVVYGFGGGLGFMLVLILFASLRERLAAADVPAPFQGIAIGMVTAGLMSLAFLGFTGLIKL.

Helical transmembrane passes span 5-25 (LLLL…FLGL), 39-59 (VGMG…AYLV), 72-92 (LSTL…EMVI), 102-122 (ILGI…LALL), 134-154 (VVYG…FASL), and 170-190 (IAIG…FTGL).

The protein belongs to the NqrDE/RnfAE family. In terms of assembly, the complex is composed of six subunits: RnfA, RnfB, RnfC, RnfD, RnfE and RnfG.

It localises to the cell inner membrane. Its function is as follows. Part of a membrane-bound complex that couples electron transfer with translocation of ions across the membrane. The protein is Ion-translocating oxidoreductase complex subunit A of Tolumonas auensis (strain DSM 9187 / NBRC 110442 / TA 4).